The following is a 25-amino-acid chain: Dermaseptin-DI5 (25 aa).

The protein belongs to the frog skin active peptide (FSAP) family. Dermaseptin subfamily. Expressed by the skin glands.

It is found in the secreted. Its function is as follows. Antibacterial peptide with activity against Gram-positive bacteria S.aureus and E.faecalis, and Gram-negative bacteria P.aeruginosa and E.coli. The protein is Dermaseptin-DI5 of Phyllomedusa distincta (Monkey frog).